The primary structure comprises 544 residues: MFCNQCEQTTRGDVCHQWGACGKSPEVDALQDLLVHCLRGLSQVALQAKSLGLATRETDEFTCEMLFSTLTNVNFSTSDFISFVNRAIALRESLKLQIQATGNAVIQSAINSFQPASDTQKQIQQGKDLEFEFISQSAKNVDIFSLKLTLLYGLKGVAAYAFHALELNQHDESLYIFFHEVLANLDAQDKSLQDWLDLTLKVGQMNLKAMELLDAGNTETFGHPTPTTVPLGHTVGKAILVSGHDLLALKAVLEQTSGTGIKVYTHGELLPAHGYPKLKQTHPHLYGHYGTAWQNQTHEFERFPGAIVMTTNCLMPPHETYKDKVFTLGPVGYPGLQHISIHDISLVIQKALELPGFTEDSEQKTVTTGFARNAVLGVADTVINAVKQGDIRHFFLVGGCDGAKPGRNYYSDLVEKIPNDCVVLTLGCGKFRFFDQNLGDIGGIPRLLDLGQCNDAYSAIQIAVALANTFEVNVNQLPLSMILSWYEQKAIAVLLTLLYLGIQNIRIGPTLPAFLTPNVVKLLSETFHLQLITTPEQDLAVCLG.

[4Fe-4S] cluster-binding residues include C3, C6, C15, and C21. Residues H244, E268, C313, C400, C428, C453, E487, and K489 each coordinate hybrid [4Fe-2O-2S] cluster. Residue C400 is modified to Cysteine persulfide.

The protein belongs to the HCP family. It depends on [4Fe-4S] cluster as a cofactor. The cofactor is hybrid [4Fe-2O-2S] cluster.

The protein localises to the cytoplasm. It catalyses the reaction A + NH4(+) + H2O = hydroxylamine + AH2 + H(+). Catalyzes the reduction of hydroxylamine to form NH(3) and H(2)O. In Trichormus variabilis (strain ATCC 29413 / PCC 7937) (Anabaena variabilis), this protein is Hydroxylamine reductase.